We begin with the raw amino-acid sequence, 767 residues long: MDEMNKINYTEALEYHEKDKPGKIAITTTKSLVTQQDLSLAYSPGVAAPCLEISKNLEAVYKYTSRSNLVAVISNGTAVLGLGNLGAAASKPVMEGKAVLFKKFADIDAIDLEVNTEDPIEFINAVKYLGYSFGGINLEDIKAPECFLIEEKLKSLMDIPVFHDDQHGTAIITAAGLINAAYLTNRTLKDLKIVINGAGAAAIACIDLLIALGVDKSKIILCDTKGVIYKGRTSGMNKWKERYASDTKIRTLTESLNNADVFIGLSVKGAVTKDMISKMAHKPIIFAMANPDPEITPEDIKFVRDDAIIATGRSDYNNQVNNVMGFPYIFRGALDVRASTINTEMKIAAARAIADLARRPVPEEVYKAYSGRKMVFGNEYIIPVPFDPRLITVVATAVAVAAIESGVARVKDFSIDKYKQQLGSRLNPTANYMNFLAEKIHNVPLKRIVFAEGEEEEVISAALMMRDEKYGNPIIIGRVERIEVTLKKIGKDISLAGIQIMNAALSDRLEQYTDYLYKRLQRKGYLYRDCAKLVKTDKNIFAACMVACGDGDALLTGVTKSYIDSLEDIIKVISPKQNRRILGYSIMIAKDHNIIIADNCITEYPNSLELAQIATQTAEIAKNMGITPRVALIAFSTFGNSSQEKTVRIREAVNILDNFSKDKKKLNGIKVDFEYDGEMSVKVALDHDLRKLYQFCRLSGSANVLIMPGLNSAAISTELLQKFSSNSFIGPITNGFAKPVQILPTTATANEILKIATFACVEAIKEV.

The malic enzyme stretch occupies residues 1 to 430 (MDEMNKINYT…QLGSRLNPTA (430 aa)). Tyr-42 serves as the catalytic Proton donor. Catalysis depends on Lys-97, which acts as the Proton acceptor. 3 residues coordinate a divalent metal cation: Glu-139, Asp-140, and Asp-165. Residues 198-201 (AGAA), Asn-290, and Asn-322 each bind NADP(+). The segment at 431 to 767 (NYMNFLAEKI…FACVEAIKEV (337 aa)) is phosphate acetyltransferase.

This sequence in the N-terminal section; belongs to the malic enzymes family. The protein in the C-terminal section; belongs to the phosphate acetyltransferase and butyryltransferase family. Mg(2+) is required as a cofactor. The cofactor is Mn(2+).

It catalyses the reaction (S)-malate + NADP(+) = pyruvate + CO2 + NADPH. It carries out the reaction oxaloacetate + H(+) = pyruvate + CO2. This is Probable NADP-dependent malic enzyme from Rickettsia prowazekii (strain Madrid E).